Reading from the N-terminus, the 240-residue chain is Adenosylcobinamide-GDP ribazoletransferase (240 aa).

5 helical membrane-spanning segments follow: residues 31 to 51, 57 to 77, 109 to 129, 133 to 153, and 185 to 205; these read LLYY…ASHL, APLH…ALHL, IAVV…WVLV, VGAQ…GLFL, and LFCL…FAWL.

The protein belongs to the CobS family. Mg(2+) is required as a cofactor.

It is found in the cell inner membrane. The catalysed reaction is alpha-ribazole + adenosylcob(III)inamide-GDP = adenosylcob(III)alamin + GMP + H(+). The enzyme catalyses alpha-ribazole 5'-phosphate + adenosylcob(III)inamide-GDP = adenosylcob(III)alamin 5'-phosphate + GMP + H(+). The protein operates within cofactor biosynthesis; adenosylcobalamin biosynthesis; adenosylcobalamin from cob(II)yrinate a,c-diamide: step 7/7. In terms of biological role, joins adenosylcobinamide-GDP and alpha-ribazole to generate adenosylcobalamin (Ado-cobalamin). Also synthesizes adenosylcobalamin 5'-phosphate from adenosylcobinamide-GDP and alpha-ribazole 5'-phosphate. This Pseudomonas putida (strain GB-1) protein is Adenosylcobinamide-GDP ribazoletransferase.